The sequence spans 366 residues: D-alanine--D-alanine ligase (366 aa).

Positions 146–352 constitute an ATP-grasp domain; the sequence is KICFEHAGLQ…YTELINRLIE (207 aa). An ATP-binding site is contributed by 179–234; the sequence is EKKLRYPMFVKPANMGSSVGISKAHNRNELIEAIELALAYDRKFLIEKAINAREME. Asp-305, Glu-319, and Asn-321 together coordinate Mg(2+).

Belongs to the D-alanine--D-alanine ligase family. Requires Mg(2+) as cofactor. The cofactor is Mn(2+).

It localises to the cytoplasm. It catalyses the reaction 2 D-alanine + ATP = D-alanyl-D-alanine + ADP + phosphate + H(+). It participates in cell wall biogenesis; peptidoglycan biosynthesis. Its function is as follows. Cell wall formation. This is D-alanine--D-alanine ligase from Chloroherpeton thalassium (strain ATCC 35110 / GB-78).